The chain runs to 320 residues: MPDPMRSYLDFEKPVAELDSKIDELHALAAGGSNIGEEIAKIEEKALAALTELYAALTPWQKTQVARHPQRPHCVDYIEGLITEFTPLAGDRKFGEDEALIGGFGRFRGESVCVLGQEKGFSTETRLKHNFGMARPEGYRKAVRLMEMADRFGLPVLSLVDTAGAYPGIGAEERGQAEAIARSTEACLKLGVPNVAVVIGEGGSGGAIAIATANKVLMLEHAIYSVISPEAASSILWRDSSKAQEAATSMKITAQDLLRFGVIDQILTEPRGGAHRDSAAMIAKAGDAIAKSFADLSSLDSDAIRAQRRQKFLDIGRKLG.

In terms of domain architecture, CoA carboxyltransferase C-terminal spans isoleucine 42–aspartate 295.

The protein belongs to the AccA family. As to quaternary structure, acetyl-CoA carboxylase is a heterohexamer composed of biotin carboxyl carrier protein (AccB), biotin carboxylase (AccC) and two subunits each of ACCase subunit alpha (AccA) and ACCase subunit beta (AccD).

The protein resides in the cytoplasm. It catalyses the reaction N(6)-carboxybiotinyl-L-lysyl-[protein] + acetyl-CoA = N(6)-biotinyl-L-lysyl-[protein] + malonyl-CoA. It participates in lipid metabolism; malonyl-CoA biosynthesis; malonyl-CoA from acetyl-CoA: step 1/1. Component of the acetyl coenzyme A carboxylase (ACC) complex. First, biotin carboxylase catalyzes the carboxylation of biotin on its carrier protein (BCCP) and then the CO(2) group is transferred by the carboxyltransferase to acetyl-CoA to form malonyl-CoA. The chain is Acetyl-coenzyme A carboxylase carboxyl transferase subunit alpha from Rhodopseudomonas palustris (strain BisA53).